Reading from the N-terminus, the 122-residue chain is Large ribosomal subunit protein eL8 (122 aa).

Belongs to the eukaryotic ribosomal protein eL8 family. Part of the 50S ribosomal subunit. Probably part of the RNase P complex.

The protein localises to the cytoplasm. Functionally, multifunctional RNA-binding protein that recognizes the K-turn motif in ribosomal RNA, the RNA component of RNase P, box H/ACA, box C/D and box C'/D' sRNAs. The sequence is that of Large ribosomal subunit protein eL8 from Methanothrix thermoacetophila (strain DSM 6194 / JCM 14653 / NBRC 101360 / PT) (Methanosaeta thermophila).